The chain runs to 528 residues: GMP synthase [glutamine-hydrolyzing] (528 aa).

One can recognise a Glutamine amidotransferase type-1 domain in the interval 13-204 (SIVILDFGSQ…VHNICRSKPD (192 aa)). Catalysis depends on C90, which acts as the Nucleophile. Catalysis depends on residues H178 and E180. Positions 205–403 (WTTNTFIDEA…LGLPEEIVNR (199 aa)) constitute a GMPS ATP-PPase domain. ATP is bound at residue 232-238 (SGGVDSS).

Homodimer.

It catalyses the reaction XMP + L-glutamine + ATP + H2O = GMP + L-glutamate + AMP + diphosphate + 2 H(+). Its pathway is purine metabolism; GMP biosynthesis; GMP from XMP (L-Gln route): step 1/1. Its function is as follows. Catalyzes the synthesis of GMP from XMP. In Prochlorococcus marinus (strain SARG / CCMP1375 / SS120), this protein is GMP synthase [glutamine-hydrolyzing].